Consider the following 1165-residue polypeptide: MLEGPILAVSRQTKSVVDIPGAPQRYSFAKVSAPIEVPGLLDLQLDSYSWLIGTPEWRARQKEEFGEGARVTSGLENILEELSPIQDYSGNMSLSLSEPRFEDVKNTIDEAKEKDINYAAPLYVTAEFVNNTTGEIKSQTVFIGDFPMMTDKGTFIINGTERVVVSQLVRSPGVYFDQTIDKSTERPLHAVKVIPSRGAWLEFDVDKRDSVGVRIDRKRRQPVTVLLKALGWTTEQITERFGFSEIMMSTLESDGVANTDEALLEIYRKQRPGEQPTRDLAQSLLDNSFFRAKRYDLARVGRYKINRKLGLGGDHDGLMTLTEEDIATTIEYLVRLHAGERVMTSPNGEEIPVETDDIDHFGNRRLRTVGELIQNQVRVGLSRMERVVRERMTTQDAESITPTSLINVRPVSAAIREFFGTSQLSQFMDQNNSLSGLTHKRRLSALGPGGLSRERAGIEVRDVHPSHYGRMCPIETPEGPNIGLIGSLASYARVNPFGFIETPYRRIIDGKLTDQIDYLTADEEDRFVVAQANTHYDEEGNITDETVTVRLKDGDIAMVGRNAVDYMDVSPRQMVSVGTAMIPFLEHDDANRALMGANMQKQAVPLIRAEAPFVGTGMEQRAAYDAGDLVITPVAGVVENVSADFITIMADDGKRETYLLRKFQRTNQGTSYNQKPLVNLGERVEAGQVIADGPGTFNGEMSLGRNLLVAFMPWEGHNYEDAIILNQNIVEQDILTSIHIEEHEIDARDTKLGAEEITRDIPNVSEEVLKDLDDRGIVRIGADVRDGDILVGKVTPKGETELTPEERLLRAIFGEKAREVRDTSMKVPHGETGKVIGVRHFSREDDDDLAPGVNEMIRIYVAQKRKIQDGDKLAGRHGNKGVVGKILPQEDMPFLPDGTPVDIILNTHGVPRRMNIGQVLETHLGWLASAGWSVDPEDPENAELVKTLPADLLEVPAGSLTATPVFDGASNEELAGLLANSRPNRDGDVMVNADGKATLIDGRSGEPYPYPVSIGYMYMLKLHHLVDEKIHARSTGPYSMITQQPLGGKAQFGGQRFGEMEVWAMQAYGAAYTLQELLTIKSDDVVGRVKVYEAIVKGENIPDPGIPESFKVLLKELQSLCLNVEVLSADGTPMELAGDDDDFDQAGASLGINLSRDERSDADTA.

The protein belongs to the RNA polymerase beta chain family. As to quaternary structure, the RNAP catalytic core consists of 2 alpha, 1 beta, 1 beta' and 1 omega subunit. When a sigma factor is associated with the core the holoenzyme is formed, which can initiate transcription.

The catalysed reaction is RNA(n) + a ribonucleoside 5'-triphosphate = RNA(n+1) + diphosphate. In terms of biological role, DNA-dependent RNA polymerase catalyzes the transcription of DNA into RNA using the four ribonucleoside triphosphates as substrates. The protein is DNA-directed RNA polymerase subunit beta of Corynebacterium glutamicum (strain ATCC 13032 / DSM 20300 / JCM 1318 / BCRC 11384 / CCUG 27702 / LMG 3730 / NBRC 12168 / NCIMB 10025 / NRRL B-2784 / 534).